The sequence spans 461 residues: Cysteine--tRNA ligase (461 aa).

Residue Cys30 participates in Zn(2+) binding. Positions 32–42 (VTVYDLCHIGH) match the 'HIGH' region motif. Positions 211, 236, and 240 each coordinate Zn(2+). Residues 268–272 (KMSKS) carry the 'KMSKS' region motif. Lys271 contacts ATP.

This sequence belongs to the class-I aminoacyl-tRNA synthetase family. As to quaternary structure, monomer. Zn(2+) is required as a cofactor.

Its subcellular location is the cytoplasm. It carries out the reaction tRNA(Cys) + L-cysteine + ATP = L-cysteinyl-tRNA(Cys) + AMP + diphosphate. In Shewanella sp. (strain MR-4), this protein is Cysteine--tRNA ligase.